A 477-amino-acid chain; its full sequence is MAMKIGTQKFKERVSDGLDNEFMRGAVSSAQERLRARRLEAAKELGNWEEWRSLAEEIRQHVLENLDYYLEQLAENVAKKGGHVFFAQTAEEATGYIRDVVKKKNGKKIVKSKSMVTEEINMNEALESDGCEVVETDLGEYILQIDDHDPPSHIVAPALHKNKEQIRDVFKERIGYRNTEKPEELVMHARAVLRKKFLEADIGITGCNFAIADTGSVSLVTNEGNGRLVTTIPKTQITVMGMERIVPSFDEFEVLVGMLTRSAVGQRLTSYITALTGPRLPGEADGPEEFHLVIVDNGRSNILGTEFQSVLQCIRCAACINVCPVYRHVGGHSYGSIYSGPIGAVLSPLLGGYDDYKELPYASSLCAACSEACPVKIPLHELLLKHRQRIVEKEGRAPISEKLAMKAFGLGTSAPSLYKMGSKWAPAAMKPFKEDGKITKGPGPLKQWTQIRDFPAPNKSRFRDWFEDRRKEKGEDK.

4Fe-4S ferredoxin-type domains lie at Gly-304–Tyr-334 and Tyr-353–Leu-382. [4Fe-4S] cluster is bound by residues Cys-313, Cys-316, Cys-319, Cys-323, Cys-366, Cys-369, and Cys-373. The segment at Lys-433–Lys-477 is disordered. A compositionally biased stretch (basic and acidic residues) spans Arg-461 to Lys-477.

This sequence belongs to the LutB/YkgF family.

In terms of biological role, is involved in L-lactate degradation and allows cells to grow with lactate as the sole carbon source. Has probably a role as an electron transporter during oxidation of L-lactate. This is Lactate utilization protein B from Bacillus licheniformis (strain ATCC 14580 / DSM 13 / JCM 2505 / CCUG 7422 / NBRC 12200 / NCIMB 9375 / NCTC 10341 / NRRL NRS-1264 / Gibson 46).